A 1857-amino-acid chain; its full sequence is Fatty acid synthase subunit alpha (1857 aa).

The tract at residues 96 to 132 (EEEPEATEPAPSATPAAPAAAPAAGAPPPPPSAGPAA) is disordered. Positions 102–119 (TEPAPSATPAAPAAAPAA) are enriched in low complexity. One can recognise a Carrier domain in the interval 139 to 214 (VTAVDILRTL…ASMQATFNGQ (76 aa)). Position 174 is an O-(pantetheine 4'-phosphoryl)serine (serine 174). Residues 577-604 (QIIPQENGHSKKGGRSAAKRNTPTRPGK) are disordered. A beta-ketoacyl reductase region spans residues 648–845 (KNVLMTGAGA…GAVIGWTRGT (198 aa)). The 542-residue stretch at 1092 to 1633 (LQEIVIQEDL…QKGAQVIGIH (542 aa)) folds into the Ketosynthase family 3 (KS3) domain. Residues cysteine 1275, histidine 1518, and histidine 1559 each act as for beta-ketoacyl synthase activity in the active site. Residues aspartate 1743, valine 1744, and glutamate 1745 each coordinate Mg(2+). Residues 1743-1745 (DVE), tyrosine 1769, serine 1779, 1788-1798 (EAVFKSLGVSS), 1812-1815 (VDAN), and 1842-1844 (ISH) contribute to the acetyl-CoA site. Residues serine 1843 and histidine 1844 each contribute to the Mg(2+) site.

This sequence belongs to the thiolase-like superfamily. Fungal fatty acid synthetase subunit alpha family. In terms of assembly, [Alpha(6)beta(6)] hexamers of two multifunctional subunits (alpha and beta).

The enzyme catalyses acetyl-CoA + n malonyl-CoA + 2n NADPH + 4n H(+) = a long-chain-acyl-CoA + n CoA + n CO2 + 2n NADP(+).. It carries out the reaction a fatty acyl-[ACP] + malonyl-[ACP] + H(+) = a 3-oxoacyl-[ACP] + holo-[ACP] + CO2. The catalysed reaction is a (3R)-hydroxyacyl-[ACP] + NADP(+) = a 3-oxoacyl-[ACP] + NADPH + H(+). Its function is as follows. Fatty acid synthetase catalyzes the formation of long-chain fatty acids from acetyl-CoA, malonyl-CoA and NADPH. The alpha subunit contains domains for: acyl carrier protein, 3-oxoacyl-[acyl-carrier-protein] reductase, and 3-oxoacyl-[acyl-carrier-protein] synthase. This is Fatty acid synthase subunit alpha (FAS2) from Penicillium patulum (Penicillium griseofulvum).